The chain runs to 359 residues: Dihydroorotate dehydrogenase (quinone) (359 aa).

FMN-binding positions include 65–69 and Thr89; that span reads AGLDK. Lys69 serves as a coordination point for substrate. Residue 114–118 coordinates substrate; the sequence is NRLGF. FMN is bound by residues Asn149 and Asn182. Substrate is bound at residue Asn182. Catalysis depends on Ser185, which acts as the Nucleophile. Asn187 serves as a coordination point for substrate. Residues Lys233 and Thr261 each coordinate FMN. 262-263 is a substrate binding site; sequence NT. FMN contacts are provided by residues Gly284, Gly313, and 334 to 335; that span reads YT.

The protein belongs to the dihydroorotate dehydrogenase family. Type 2 subfamily. As to quaternary structure, monomer. Requires FMN as cofactor.

It localises to the cell membrane. It catalyses the reaction (S)-dihydroorotate + a quinone = orotate + a quinol. It functions in the pathway pyrimidine metabolism; UMP biosynthesis via de novo pathway; orotate from (S)-dihydroorotate (quinone route): step 1/1. Functionally, catalyzes the conversion of dihydroorotate to orotate with quinone as electron acceptor. The polypeptide is Dihydroorotate dehydrogenase (quinone) (Paracidovorax citrulli (strain AAC00-1) (Acidovorax citrulli)).